The chain runs to 252 residues: MQYPVDTHTHTVASSHAYSTIHDYLAVAKQKGVRLFATTDHGPAMADAPHFWHFVNLRVLPRMVDGVGILRGIEANIKNRDGEIDYFGDYLSQLDIVLAGFHEPVFAPSDKVTHTEAMINTIRSGKVDIITHPGNPAYPIDIEAVVTAAAQYGVALEINNSSFEVSRKGSEANCTAIAKAAKALGATLVMGSDSHVAFSLGGFDRALSIIDAVDYPKDKLLNRSPMALLDFLTLRGHQTVADFIPHFRDEAI.

Residues H8, H10, H16, H41, E74, H102, H132, D193, and H195 each coordinate Zn(2+).

Belongs to the PHP family. Requires Zn(2+) as cofactor.

The protein is Probable phosphatase SO_1652 of Shewanella oneidensis (strain ATCC 700550 / JCM 31522 / CIP 106686 / LMG 19005 / NCIMB 14063 / MR-1).